The chain runs to 595 residues: Leiomodin-1 (595 aa).

Disordered stretches follow at residues 1 to 69 (MSKV…EAML), 81 to 322 (QREM…KVKN), and 467 to 568 (DKQR…QEKN). S12 is modified (phosphoserine). The span at 27 to 40 (EEMEELEKELDVVD) shows a compositional bias: acidic residues. 8 stretches are compositionally biased toward basic and acidic residues: residues 81-110 (QREM…DASR), 117-127 (QDSDLGKEPKK), 134-192 (FSRD…EKTG), 200-223 (SRDK…KLTA), 230-249 (GRRE…KPED), 257-287 (RDWR…KAPE), 467-476 (DKQRQKRLQE), and 484-493 (SGEKKDRLEV). S85 bears the Phosphoserine mark. S135 carries the post-translational modification Phosphoserine. 8 consecutive repeat copies span residues 165–179 (AAVD…GREE), 180–195 (RAAA…GSVK), 196–211 (NAGL…EEVK), 212–226 (EPSK…AESR), 227–240 (NTVG…LKES), 242–255 (KENK…IGSG), 256–271 (GRDW…KEEN), and 272–288 (QPDK…APEK). The interval 165–288 (AAVDRKESGK…EESKTKAPEK (124 aa)) is 8 X approximate tandem repeats. The segment at 503-522 (SPKPSPQPSPKPAPKNSPKK) is 5 X 4 AA approximate tandem repeats. Pro residues-rich tracts occupy residues 505–517 (KPSP…PAPK) and 527–538 (AAPPPPPPPLAP). The residue at position 550 (S550) is a Phosphoserine. A WH2 domain is found at 569–588 (SRDQLLAAIRSSNLKQLKKV).

Belongs to the tropomodulin family. As to expression, detected in aorta, urinary bladder and uterus (at protein level). Detected in smooth muscle cells. Detected in aorta, bladder, colon, intestine, stomach and uterus.

It localises to the cytoplasm. It is found in the myofibril. The protein resides in the sarcomere. Its subcellular location is the cytoskeleton. Functionally, required for proper contractility of visceral smooth muscle cells. Mediates nucleation of actin filaments. This is Leiomodin-1 (Lmod1) from Mus musculus (Mouse).